The sequence spans 91 residues: Small ribosomal subunit protein uS19 (91 aa).

The protein belongs to the universal ribosomal protein uS19 family.

Functionally, protein S19 forms a complex with S13 that binds strongly to the 16S ribosomal RNA. The polypeptide is Small ribosomal subunit protein uS19 (Exiguobacterium sp. (strain ATCC BAA-1283 / AT1b)).